Reading from the N-terminus, the 1174-residue chain is K(+) efflux antiporter 2, chloroplastic (1174 aa).

Residues 1–57 (MDFASSVQRQSMFHGGADFASYCLPNRMISAKLCPKGLGGTRFWDPMIDSKVRSAIR) constitute a chloroplast transit peptide. The Stromal segment spans residues 58–565 (SKRNVSYRSS…MFPQQEVNEE (508 aa)). The segment at 119-141 (GSDDREVTFSKEEKDTREQDSAP) is disordered. A coiled-coil region spans residues 142-350 (SLEELRDLLN…ALQRAEKTLF (209 aa)). At Lys170 the chain carries N6-acetyllysine; by NSI. Positions 420–448 (EAEGEAEKSKNVVLTKKQEVQKDLPRESS) are enriched in basic and acidic residues. The disordered stretch occupies residues 420–457 (EAEGEAEKSKNVVLTKKQEVQKDLPRESSSHNGTKTSL). Residues 566 to 586 (EASLLDVLWLLLASVIFVPLF) form a helical membrane-spanning segment. The Chloroplast intermembrane portion of the chain corresponds to 587-592 (QKIPGG). The helical transmembrane segment at 593–613 (SPVLGYLAAGILIGPYGLSII) threads the bilayer. The Stromal portion of the chain corresponds to 614-620 (RNVHGTK). A helical membrane pass occupies residues 621 to 641 (AIAEFGVVFLLFNIGLELSVE). Topologically, residues 642–648 (RLSSMKK) are chloroplast intermembrane. A helical transmembrane segment spans residues 649–669 (YVFGLGSAQVLVTAAVIGLIT). At 670 to 678 (HYVAGQAGP) the chain is on the stromal side. Residues 679–699 (AAIVIGNGLALSSTAVVLQVL) traverse the membrane as a helical segment. Residues 700–713 (QERGESTSRHGRAT) are Chloroplast intermembrane-facing. The chain crosses the membrane as a helical span at residues 714–734 (FSVLLFQDLAVVVLLILIPLI). At 735-746 (SPNSSKGGIGFQ) the chain is on the stromal side. A helical membrane pass occupies residues 747–767 (AIAEALGLAAIKAAVAITGII). The Chloroplast intermembrane segment spans residues 768–807 (AGGRLLLRPIYKQIAENRNAEIFSANTLLVILGTSLLTAR). The chain crosses the membrane as a helical span at residues 808–828 (AGLSMALGAFLAGLLLAETEF). Residues 829–841 (SLQVESDIAPYRG) lie on the Stromal side of the membrane. Residues 842 to 862 (LLLGLFFMTVGMSIDPKLLLA) traverse the membrane as a helical segment. Over 863-865 (NFP) the chain is Chloroplast intermembrane. The helical transmembrane segment at 866-886 (LIMGTLGLLLVGKTILVVIIG) threads the bilayer. Topologically, residues 887 to 898 (KLFGISIISAVR) are stromal. Residues 899 to 919 (VGLLLAPGGEFAFVAFGEAVN) traverse the membrane as a helical segment. The Chloroplast intermembrane segment spans residues 920–928 (QGIMTPQLS). A helical membrane pass occupies residues 929–949 (SLLFLVVGISMALTPWLAAGG). Over 950-1174 (QLIASRFELQ…NQIIEGTLAI (225 aa)) the chain is Stromal. Positions 975-1092 (QGHIIICGFG…EKAGATAVVP (118 aa)) constitute an RCK N-terminal domain. The interval 1141–1174 (SLGYGFSRSTSKPKPPSPSETSDDNQIIEGTLAI) is disordered.

This sequence belongs to the monovalent cation:proton antiporter 2 (CPA2) transporter (TC 2.A.37) family. KEA (TC 2.A.37.1) subfamily. In terms of processing, acetylated at Lys-170 by the stromal acetyltransferase enzyme NSI. In terms of tissue distribution, detected in leaves, stems and flowers. Expressed in shoots and roots. Mainly localized to leaf veins, hypocotyls, mesophylls and guard cells. Accumulates at high levels in small and dividing plastids (at protein level).

The protein localises to the plastid. It is found in the chloroplast inner membrane. Its subcellular location is the plastid inner membrane. The enzyme catalyses K(+)(in) + H(+)(out) = K(+)(out) + H(+)(in). With respect to regulation, repressed by sodium ions Na(+). Functionally, electroneutral K(+)/H(+) efflux antiporter modulating monovalent cation and pH homeostasis in plastids, especially during plastid division and thylakoid membrane formation. Transports K(+) and Cs(+) preferentially relative to Na(+) or Li(+). May function in osmotic adjustment. Collaboratively with KEA1, adjusts alkaline stromal pH upon light to dark transitions in plastids. Together with KEA1, critical for chloroplast development, including chloroplast RNA-metabolism (e.g. rRNA maturation, polysome loading and RNA-protein interactions) and plastid gene expression (PGE), ion homeostasis, and photosynthesis. Contributes, during early seedling development, to the regulation of photosynthesis and abscisic acid- (ABA-) mediated primary root growth in a sucrose-dependent manner. Involved in the regulation of reactive oxygen and nitrogen species (ROS and RNS) metabolism. Required in roots for rapid hyperosmotic-induced Ca(2+) responses and for osmo-sensory potentiation in hyperosmotic conditions. May counteract resilience to drought and salt stress, involving photorespiratory pathway and stomata closure. The chain is K(+) efflux antiporter 2, chloroplastic from Arabidopsis thaliana (Mouse-ear cress).